Consider the following 620-residue polypeptide: UDP-glucose:protein N-beta-glucosyltransferase (620 aa).

Belongs to the glycosyltransferase 41 family. Does not require a metal cofactor. is required as a cofactor.

It localises to the cytoplasm. The enzyme catalyses L-asparaginyl-[protein] + UDP-alpha-D-glucose = N(4)-(beta-D-glucosyl)-L-asparaginyl-[protein] + UDP + H(+). It functions in the pathway protein modification; protein glycosylation. Functionally, inverting glycosyltransferase that catalyzes the transfer of one glucose moiety from UDP-glucose to an asparagine residue in peptides and proteins containing the NX(S/T) motif, resulting in their modification with a beta-linked 1,N-glucose. Likely acts as a key component of a general protein glycosylation system. Also accepts UDP-galactose as a substrate donor, albeit with low efficiency. Cannot use UDP-GlcNAc or UDP-GalNAc as substrate donor. The polypeptide is UDP-glucose:protein N-beta-glucosyltransferase (Actinobacillus pleuropneumoniae serotype 7 (strain AP76)).